The sequence spans 89 residues: Small ribosomal subunit protein uS15 (89 aa).

This sequence belongs to the universal ribosomal protein uS15 family. Part of the 30S ribosomal subunit. Forms a bridge to the 50S subunit in the 70S ribosome, contacting the 23S rRNA.

In terms of biological role, one of the primary rRNA binding proteins, it binds directly to 16S rRNA where it helps nucleate assembly of the platform of the 30S subunit by binding and bridging several RNA helices of the 16S rRNA. Its function is as follows. Forms an intersubunit bridge (bridge B4) with the 23S rRNA of the 50S subunit in the ribosome. In Burkholderia mallei (strain NCTC 10247), this protein is Small ribosomal subunit protein uS15.